A 161-amino-acid chain; its full sequence is MEFTTAGLCDQFHGTHPLQIVEPLFRPFGAVSRFHGRITTLKVFEDSVLIRETLAQEVDGRVLVIDGGASHRCALLGGNLARLAADNGWQGIIVYGCVRDSVELGTVPIGIRALHTHPLDSHKRGGGDRDCLITFASVNFRTDHYLYADEDGIVVSEEKLI.

Substrate contacts are provided by residues Gly77 to Leu80 and Arg99. Residue Asp100 participates in a divalent metal cation binding.

Belongs to the class II aldolase/RraA-like family. In terms of assembly, homotrimer. A divalent metal cation serves as cofactor.

It catalyses the reaction 4-hydroxy-4-methyl-2-oxoglutarate = 2 pyruvate. The enzyme catalyses oxaloacetate + H(+) = pyruvate + CO2. Its function is as follows. Catalyzes the aldol cleavage of 4-hydroxy-4-methyl-2-oxoglutarate (HMG) into 2 molecules of pyruvate. Also contains a secondary oxaloacetate (OAA) decarboxylase activity due to the common pyruvate enolate transition state formed following C-C bond cleavage in the retro-aldol and decarboxylation reactions. The sequence is that of Putative 4-hydroxy-4-methyl-2-oxoglutarate aldolase from Methylococcus capsulatus (strain ATCC 33009 / NCIMB 11132 / Bath).